A 316-amino-acid chain; its full sequence is IDS-like terpene synthase 2 (316 aa).

Mg(2+) is bound by residues aspartate 69 and aspartate 73.

Belongs to the FPP/GGPP synthase family. The cofactor is Mg(2+).

It carries out the reaction (2E)-geranyl diphosphate + H2O = linalool + diphosphate. The enzyme catalyses (2E,6E)-farnesyl diphosphate + H2O = (6E)-nerolidol + diphosphate. Functionally, terpene synthase that shows monoterpene synthase activity and produces linalool, using geranyl diphosphate (GPP) as substrate. Also shows sesquiterpene synthase activity as it is able to convert farnesyl diphosphate (FPP) into (E)-nerolidol. The polypeptide is IDS-like terpene synthase 2 (Melampsora larici-populina (strain 98AG31 / pathotype 3-4-7) (Poplar leaf rust fungus)).